The sequence spans 176 residues: NAD(P)H-quinone oxidoreductase subunit 6, chloroplastic (176 aa).

5 helical membrane-spanning segments follow: residues I10–T30, I33–L53, V60–F80, I95–I115, and F152–T172.

It belongs to the complex I subunit 6 family. NDH is composed of at least 16 different subunits, 5 of which are encoded in the nucleus.

It localises to the plastid. It is found in the chloroplast thylakoid membrane. It carries out the reaction a plastoquinone + NADH + (n+1) H(+)(in) = a plastoquinol + NAD(+) + n H(+)(out). The catalysed reaction is a plastoquinone + NADPH + (n+1) H(+)(in) = a plastoquinol + NADP(+) + n H(+)(out). Functionally, NDH shuttles electrons from NAD(P)H:plastoquinone, via FMN and iron-sulfur (Fe-S) centers, to quinones in the photosynthetic chain and possibly in a chloroplast respiratory chain. The immediate electron acceptor for the enzyme in this species is believed to be plastoquinone. Couples the redox reaction to proton translocation, and thus conserves the redox energy in a proton gradient. The chain is NAD(P)H-quinone oxidoreductase subunit 6, chloroplastic (ndhG) from Triticum aestivum (Wheat).